The following is a 255-amino-acid chain: Indole-3-glycerol phosphate synthase (255 aa).

It belongs to the TrpC family.

The enzyme catalyses 1-(2-carboxyphenylamino)-1-deoxy-D-ribulose 5-phosphate + H(+) = (1S,2R)-1-C-(indol-3-yl)glycerol 3-phosphate + CO2 + H2O. It participates in amino-acid biosynthesis; L-tryptophan biosynthesis; L-tryptophan from chorismate: step 4/5. The sequence is that of Indole-3-glycerol phosphate synthase from Streptococcus pneumoniae serotype 2 (strain D39 / NCTC 7466).